Here is a 417-residue protein sequence, read N- to C-terminus: Phosphoglycerate kinase, cytosolic (417 aa).

Residues V23, D24, F25, N26, R39, S61, H62, G64, R65, R132, H168, and R169 each coordinate (2R)-3-phosphoglycerate. G214 and A215 together coordinate ADP. G214 is a CDP binding site. AMP-binding residues include A215 and K216. Residue A215 participates in ATP binding. Residue A215 participates in Mg(2+) binding. K216 is a (2R)-3-phosphoglycerate binding site. D219 contacts CDP. D219 is a binding site for Mg(2+). K220 and G238 together coordinate ADP. K220 is a binding site for AMP. K220 is an ATP binding site. Residue G238 participates in CDP binding. AMP contacts are provided by A239 and A311. Positions 239 and 311 each coordinate ATP. A311 and N335 together coordinate ADP. Residues G336 and F341 each contribute to the CDP site. Positions 341, 342, 374, and 375 each coordinate ADP. An AMP-binding site is contributed by E342. ATP-binding residues include E342, D374, and S375. D374 lines the Mg(2+) pocket.

Belongs to the phosphoglycerate kinase family. In terms of assembly, monomer. Requires Mg(2+) as cofactor.

It localises to the cytoplasm. It catalyses the reaction (2R)-3-phosphoglycerate + ATP = (2R)-3-phospho-glyceroyl phosphate + ADP. The protein operates within carbohydrate degradation; glycolysis; pyruvate from D-glyceraldehyde 3-phosphate: step 2/5. The protein is Phosphoglycerate kinase, cytosolic (PGKB) of Leishmania major.